Consider the following 282-residue polypeptide: Protein NEOXANTHIN-DEFICIENT 1 (282 aa).

Its function is as follows. Required for neoxanthin biosynthesis. Probably not involved directly in the enzymatic conversion of violaxanthin to neoxanthin. Is necessary but not sufficient for neoxanthin synthesis. This is Protein NEOXANTHIN-DEFICIENT 1 from Arabidopsis thaliana (Mouse-ear cress).